The chain runs to 448 residues: NADP-specific glutamate dehydrogenase (448 aa).

Substrate contacts are provided by Lys-88, Gln-109, and Lys-112. Lys-124 serves as the catalytic Proton donor. Residue Gly-163 participates in substrate binding. 2 residues coordinate NADP(+): Thr-207 and Asn-238. Residue Ser-381 participates in substrate binding.

The protein belongs to the Glu/Leu/Phe/Val dehydrogenases family. Homohexamer.

It carries out the reaction L-glutamate + NADP(+) + H2O = 2-oxoglutarate + NH4(+) + NADPH + H(+). Catalyzes the reversible oxidative deamination of glutamate to alpha-ketoglutarate and ammonia. In Helicobacter pylori (strain ATCC 700392 / 26695) (Campylobacter pylori), this protein is NADP-specific glutamate dehydrogenase (gdhA).